Reading from the N-terminus, the 257-residue chain is TLC domain-containing protein 3A (257 aa).

7 consecutive transmembrane segments (helical) span residues Met1–Trp21, Leu42–Cys62, Trp71–Met91, Leu114–Ile134, Leu142–Leu162, Gly181–Trp201, and Leu220–Leu240. Positions Asp33–Asp249 constitute a TLC domain.

Interacts with GGT7 isoform 3 and SLC3A2.

Its subcellular location is the cell membrane. This Mus musculus (Mouse) protein is TLC domain-containing protein 3A (Tlcd3a).